Consider the following 152-residue polypeptide: Deoxyuridine 5'-triphosphate nucleotidohydrolase (152 aa).

Substrate contacts are provided by residues Arg-71 to Gly-73, Asn-84, Leu-88 to Asp-90, and Met-98.

This sequence belongs to the dUTPase family. Homotrimer. Requires Mg(2+) as cofactor.

It catalyses the reaction dUTP + H2O = dUMP + diphosphate + H(+). It functions in the pathway pyrimidine metabolism; dUMP biosynthesis; dUMP from dCTP (dUTP route): step 2/2. Functionally, this enzyme is involved in nucleotide metabolism: it produces dUMP, the immediate precursor of thymidine nucleotides and it decreases the intracellular concentration of dUTP so that uracil cannot be incorporated into DNA. This is Deoxyuridine 5'-triphosphate nucleotidohydrolase from Escherichia coli O1:K1 / APEC.